Consider the following 593-residue polypeptide: Methionine--tRNA ligase (593 aa).

The short motif at 7-17 (PYANGPRHIGH) is the 'HIGH' region element. Zn(2+) is bound by residues C139, C142, C152, and C155. A 'KMSKS' region motif is present at residues 343-347 (KFSTS). T346 is a binding site for ATP.

It belongs to the class-I aminoacyl-tRNA synthetase family. MetG type 1 subfamily. As to quaternary structure, monomer. It depends on Zn(2+) as a cofactor.

It is found in the cytoplasm. It catalyses the reaction tRNA(Met) + L-methionine + ATP = L-methionyl-tRNA(Met) + AMP + diphosphate. Functionally, is required not only for elongation of protein synthesis but also for the initiation of all mRNA translation through initiator tRNA(fMet) aminoacylation. The protein is Methionine--tRNA ligase of Saccharopolyspora erythraea (strain ATCC 11635 / DSM 40517 / JCM 4748 / NBRC 13426 / NCIMB 8594 / NRRL 2338).